We begin with the raw amino-acid sequence, 365 residues long: Donuts protein 1 (365 aa).

Positions 28–49 are disordered; that stretch reads NSGLELPSQDYTNVEEKESSPK. In terms of domain architecture, CUE spans 82–125; the sequence is EKLCVLKELKIAFPEVDDTLIKAILIASQGVLEPAFNSLLYYSS. Disordered stretches follow at residues 215-246 and 286-335; these read HNTI…KGVN and ESEE…YKSA. Over residues 224–244 the composition is skewed to basic and acidic residues; the sequence is SILKGKEKGKEEEKEKGEEKG. A compositionally biased stretch (acidic residues) spans 286-295; the sequence is ESEEEEEQDV. The span at 315-331 shows a compositional bias: basic and acidic residues; sequence EAQRDSADRLPAKDDGG.

In terms of assembly, may interact directly with ADY3. Probable component of a spindle pole body (SPB) complex composed of ADY3, SSP1, DON1, MPC54, SPO21/MPC70, NUD1 and CNM67.

It localises to the prospore membrane. Its function is as follows. Involved in the pathway that organizes the prospore membrane (PSM) during sporulation. This is Donuts protein 1 (DON1) from Saccharomyces cerevisiae (strain ATCC 204508 / S288c) (Baker's yeast).